The following is a 320-amino-acid chain: Malate dehydrogenase (320 aa).

NAD(+)-binding positions include Gly-10–Gly-15 and Asp-34. Substrate is bound by residues Arg-83 and Arg-89. Residues Asn-96 and Ile-119–Asn-121 each bind NAD(+). Positions 121 and 152 each coordinate substrate. The active-site Proton acceptor is the His-176.

It belongs to the LDH/MDH superfamily. MDH type 3 family.

It catalyses the reaction (S)-malate + NAD(+) = oxaloacetate + NADH + H(+). Its function is as follows. Catalyzes the reversible oxidation of malate to oxaloacetate. This is Malate dehydrogenase from Cereibacter sphaeroides (strain ATCC 17025 / ATH 2.4.3) (Rhodobacter sphaeroides).